Reading from the N-terminus, the 396-residue chain is MEYNVVLVRYSEIAVKGGYTRSRMERLLLRALEESLAAAGVEAEVERLQGRVLVRLRSPGDAAAAARASARVFGVKSVSPAVEVEYSGIEDLAEKAAEFFGERVRGRVFRVRARRSGVEGFTSKDVERLLGKLLLERGAGGVDLEKPEYTAYVEVRGRRAYFFDTINPGPGGLPVGSEEPSLALYSGGFDSGVAAWMIMRRGSPVHLAFYDFGVPEALEVAVEGAKTLAGEWAWGYRPRLYVVNFRGAALIVNGLVKPSYRTLVLRRLMLLHAQDLAAREGFEALVTGESVGQVASQTVRNLRLISSGLELPVLRPLAGMDKDEIVEKSREIGLYDIARRQVEVCGVDQPPNPRASPQGFRSEFEKVRDIFIPPPRVFDLKGESLHSILKTLGLRG.

Residues 63–166 (AAAARASARV…GRRAYFFDTI (104 aa)) enclose the THUMP domain. Residues 184–185 (LY), Arg266, Gly288, and Gln297 each bind ATP.

It belongs to the ThiI family.

Its subcellular location is the cytoplasm. It carries out the reaction [ThiI sulfur-carrier protein]-S-sulfanyl-L-cysteine + a uridine in tRNA + 2 reduced [2Fe-2S]-[ferredoxin] + ATP + H(+) = [ThiI sulfur-carrier protein]-L-cysteine + a 4-thiouridine in tRNA + 2 oxidized [2Fe-2S]-[ferredoxin] + AMP + diphosphate. The enzyme catalyses [ThiS sulfur-carrier protein]-C-terminal Gly-Gly-AMP + S-sulfanyl-L-cysteinyl-[cysteine desulfurase] + AH2 = [ThiS sulfur-carrier protein]-C-terminal-Gly-aminoethanethioate + L-cysteinyl-[cysteine desulfurase] + A + AMP + 2 H(+). Its pathway is cofactor biosynthesis; thiamine diphosphate biosynthesis. Catalyzes the ATP-dependent transfer of a sulfur to tRNA to produce 4-thiouridine in position 8 of tRNAs, which functions as a near-UV photosensor. Also catalyzes the transfer of sulfur to the sulfur carrier protein ThiS, forming ThiS-thiocarboxylate. This is a step in the synthesis of thiazole, in the thiamine biosynthesis pathway. The sulfur is donated as persulfide by IscS. The protein is Probable tRNA sulfurtransferase of Aeropyrum pernix (strain ATCC 700893 / DSM 11879 / JCM 9820 / NBRC 100138 / K1).